A 1403-amino-acid chain; its full sequence is Baculoviral IAP repeat-containing protein 1f (1403 aa).

3 BIR repeats span residues 60–127, 159–227, and 278–345; these read EAKR…CEFL, EEAR…CEFL, and EELR…CVFL. Cys-315, Cys-318, His-335, and Cys-342 together coordinate Zn(2+). One can recognise an NACHT domain in the interval 464-759; that stretch reads SVMCVEGEAG…EFLAAVRLTE (296 aa). ATP is bound at residue 473 to 478; the sequence is GSGKTT.

Component of the NLRC4 inflammasome, at least composed of NLRC4, caspase-1 (CASP1) and some NAIP protein. In terms of assembly, (Microbial infection) Interacts with S.typhimurium (Salmonella) flagellin.

Functionally, sensor component of the NLRC4 inflammasome that specifically recognizes and binds flagellin from pathogenic bacteria. Association of pathogenic bacteria proteins drives in turn drive assembly and activation of the NLRC4 inflammasome, promoting caspase-1 activation, cytokine production and macrophage pyroptosis. The NLRC4 inflammasome is activated as part of the innate immune response to a range of intracellular bacteria. The NLRC4 inflammasome senses Gram-negative bacteria such as L.pneumophila and P.aeruginosa, enteric pathogens S.typhimurium (Salmonella) and S.flexneri. May contribute to prevent motor-neuron apoptosis induced by a variety of signals. This is Baculoviral IAP repeat-containing protein 1f (Naip6) from Mus musculus (Mouse).